The chain runs to 222 residues: 7-cyano-7-deazaguanine synthase (222 aa).

14–24 (FSGGQDSTTCL) is a binding site for ATP. 4 residues coordinate Zn(2+): Cys-190, Cys-199, Cys-202, and Cys-205.

This sequence belongs to the QueC family. In terms of assembly, homodimer. Zn(2+) serves as cofactor.

The enzyme catalyses 7-carboxy-7-deazaguanine + NH4(+) + ATP = 7-cyano-7-deazaguanine + ADP + phosphate + H2O + H(+). It participates in purine metabolism; 7-cyano-7-deazaguanine biosynthesis. Functionally, catalyzes the ATP-dependent conversion of 7-carboxy-7-deazaguanine (CDG) to 7-cyano-7-deazaguanine (preQ(0)). The sequence is that of 7-cyano-7-deazaguanine synthase from Staphylococcus aureus (strain bovine RF122 / ET3-1).